The sequence spans 156 residues: Large ribosomal subunit protein uL30 (156 aa).

The protein belongs to the universal ribosomal protein uL30 family. In terms of assembly, part of the 50S ribosomal subunit.

In Thermofilum pendens (strain DSM 2475 / Hrk 5), this protein is Large ribosomal subunit protein uL30.